We begin with the raw amino-acid sequence, 503 residues long: Zinc metalloproteinase nas-14 (503 aa).

An N-terminal signal peptide occupies residues 1 to 25; the sequence is MRLLYSLFHCSAFLVGFTLSVGVLP. The region spanning 116 to 312 is the Peptidase M12A domain; it reads NLVTYPDKLW…KKVNKLYQCG (197 aa). Intrachain disulfides connect C158–C311 and C182–C202. A glycan (N-linked (GlcNAc...) asparagine) is linked at N192. H210 provides a ligand contact to Zn(2+). E211 is an active-site residue. Zn(2+) contacts are provided by H214 and H220. Low complexity predominate over residues 317–340; that stretch reads TSSTTTTTTTTTTTTTTEEPTTTT. Residues 317–377 form a disordered region; it reads TSSTTTTTTT…TPKPVERSRN (61 aa). Residues 342–351 show a composition bias toward basic and acidic residues; that stretch reads VEEKPKDKKV. Residues 352 to 370 are compositionally biased toward low complexity; that stretch reads SSTTTTTKKPTTTTTTTPK. 3 cysteine pairs are disulfide-bonded: C380-C414, C387-C407, and C396-C411. One can recognise a ShKT 1 domain in the interval 380-414; it reads CEDLNAHCGMWEQLGHCQHSVKYMAHYCRKACNLC. The interval 422–464 is disordered; sequence TTTTPKPVPRNKEKENKSASSTTRGTSTATSTTPKTTTTTTSA. N437 is a glycosylation site (N-linked (GlcNAc...) asparagine). Residues 439-464 show a composition bias toward low complexity; that stretch reads SASSTTRGTSTATSTTPKTTTTTTSA. 3 cysteine pairs are disulfide-bonded: C469–C503, C476–C496, and C485–C500. One can recognise a ShKT 2 domain in the interval 469–503; it reads CEDKNLFCSYWAKIGECNSESKFMKIFCKASCGKC.

Requires Zn(2+) as cofactor. Expressed in pharyngeal muscles and mc cells.

It is found in the secreted. Its function is as follows. Metalloprotease. This chain is Zinc metalloproteinase nas-14 (nas-14), found in Caenorhabditis elegans.